The primary structure comprises 434 residues: Enolase (434 aa).

Gln-168 is a (2R)-2-phosphoglycerate binding site. Residue Glu-210 is the Proton donor of the active site. Residues Asp-247, Glu-292, and Asp-319 each coordinate Mg(2+). (2R)-2-phosphoglycerate contacts are provided by Lys-344, Arg-373, Ser-374, and Lys-395. The Proton acceptor role is filled by Lys-344.

This sequence belongs to the enolase family. The cofactor is Mg(2+).

It localises to the cytoplasm. It is found in the secreted. The protein resides in the cell surface. The enzyme catalyses (2R)-2-phosphoglycerate = phosphoenolpyruvate + H2O. The protein operates within carbohydrate degradation; glycolysis; pyruvate from D-glyceraldehyde 3-phosphate: step 4/5. In terms of biological role, catalyzes the reversible conversion of 2-phosphoglycerate (2-PG) into phosphoenolpyruvate (PEP). It is essential for the degradation of carbohydrates via glycolysis. The polypeptide is Enolase (Endomicrobium trichonymphae).